A 1273-amino-acid polypeptide reads, in one-letter code: Kinesin-like protein KIN-7O (1273 aa).

Positions 3–327 (RIHVSVRARP…LQFASRALRV (325 aa)) constitute a Kinesin motor domain. 79-86 (GQTNSGKT) serves as a coordination point for ATP. Residues 333 to 408 (VNEILTDAAL…QRERVLQEQA (76 aa)) are a coiled coil. Residues 452–474 (SEDQSNVLSRGSSLESARSERET) are disordered. Over residues 453-467 (EDQSNVLSRGSSLES) the composition is skewed to polar residues. Coiled coils occupy residues 602 to 674 (EAIL…ESEV) and 751 to 1023 (VQSS…MEEE).

It belongs to the TRAFAC class myosin-kinesin ATPase superfamily. Kinesin family. KIN-7 subfamily.

In Arabidopsis thaliana (Mouse-ear cress), this protein is Kinesin-like protein KIN-7O.